A 287-amino-acid chain; its full sequence is Elongation factor Ts (287 aa).

An involved in Mg(2+) ion dislocation from EF-Tu region spans residues 80–83; that stretch reads TDFL.

Belongs to the EF-Ts family.

The protein localises to the cytoplasm. Its function is as follows. Associates with the EF-Tu.GDP complex and induces the exchange of GDP to GTP. It remains bound to the aminoacyl-tRNA.EF-Tu.GTP complex up to the GTP hydrolysis stage on the ribosome. This is Elongation factor Ts from Pseudomonas putida (strain GB-1).